We begin with the raw amino-acid sequence, 382 residues long: Protein delta homolog 2 (382 aa).

An N-terminal signal peptide occupies residues 1-26 (MPSGCRCLNLVCLLCILGATSQPARA). 4 consecutive EGF-like domains span residues 27 to 58 (DDCS…LHCE), 62 to 89 (RMPG…KFCD), 91 to 129 (DEHI…RGCE), and 131 to 172 (KAGP…AHCE). Over 27 to 305 (DDCSSHCDLA…RQEAGLGESS (279 aa)) the chain is Extracellular. Cystine bridges form between C29/C40, C33/C46, C48/C57, C66/C71, C79/C88, C95/C107, C101/C117, C119/C128, C135/C148, C142/C160, C162/C171, C178/C189, C183/C198, C200/C209, C216/C227, C221/C236, and C238/C247. The N-linked (GlcNAc...) asparagine glycan is linked to N157. The EGF-like 5; calcium-binding domain occupies 174–210 (NVDDCLMRPCANGATCIDGINRFSCLCPEGFAGRFCT). The EGF-like 6; calcium-binding domain occupies 212-248 (NLDDCASRPCQRGARCRDRVHDFDCLCPSGYGGKTCE). The chain crosses the membrane as a helical span at residues 306 to 326 (LVALVVFGSLTAALVLATVLL). The Cytoplasmic segment spans residues 327 to 382 (TLRAWRRGICPTGPCCDPAPHYAPARQDQECQVSMLPAGFPLSPDLPPEPGKTTAL).

It is found in the membrane. Its function is as follows. Regulates adipogenesis. The chain is Protein delta homolog 2 (Dlk2) from Rattus norvegicus (Rat).